A 538-amino-acid chain; its full sequence is Exo-alpha-bergamotene synthase (538 aa).

Mg(2+) is bound by residues Asp-291, Asp-295, Asp-435, Thr-439, and Glu-443. Positions 291 to 295 match the DDXXD motif motif; sequence DDIYD.

Belongs to the terpene synthase family. The cofactor is Mg(2+). Requires Mn(2+) as cofactor.

The enzyme catalyses (2E,6E)-farnesyl diphosphate = (1S,5S,6R)-alpha-bergamotene + diphosphate. Catalyzes a mixture of sesquiterpenoids from (2E,6E)-farnesyl diphosphate. Catalyzes the formation of exo-alpha-bergamotene, as well as (E)-nerolidol, (Z)-alpha-bisabolene, (E)-beta-farnesene and beta-sesquiphellandrene. Also has activity towards geranyl diphosphate, but to a much lesser extent. The chain is Exo-alpha-bergamotene synthase from Lavandula angustifolia (Lavender).